A 252-amino-acid polypeptide reads, in one-letter code: NAC domain-containing protein 23 (252 aa).

In terms of domain architecture, NAC spans 12-177 (MPPGFRFQPT…EMVLCRISNK (166 aa)). A DNA-binding region spans residues 110-183 (TAVKRRFVFY…ISNKDLPKPP (74 aa)). The disordered stretch occupies residues 225-252 (VDDAAAADDDPGDLDEEIDDSMQRNHGG). Acidic residues predominate over residues 229 to 244 (AAADDDPGDLDEEIDD).

Forms heterodimers with NAC26. Expressed in stems and panicles. Expressed in developing seeds.

Its subcellular location is the nucleus. The protein localises to the cytoplasm. Functionally, transcription factor involved in the regulation of seed size. Possesses transactivation activity in yeast. This chain is NAC domain-containing protein 23, found in Oryza sativa subsp. indica (Rice).